The sequence spans 124 residues: Small ribosomal subunit protein uS12c (124 aa).

A disordered region spans residues 105–124 (AGVKDRRQSRSKYGAKRPKA). Basic residues predominate over residues 113–124 (SRSKYGAKRPKA).

It belongs to the universal ribosomal protein uS12 family. In terms of assembly, part of the 30S ribosomal subunit.

The protein localises to the plastid. Its subcellular location is the cyanelle. Its function is as follows. With S4 and S5 plays an important role in translational accuracy. Located at the interface of the 30S and 50S subunits. This chain is Small ribosomal subunit protein uS12c (rps12), found in Cyanophora paradoxa.